The primary structure comprises 289 residues: BTB/POZ domain-containing protein KCTD7 (289 aa).

Residues 1 to 42 (MVVVNGREPDSRHSDGAMSSSEAEDDFLEPATPTATQAGHGL) form a disordered region. Residues 53 to 141 (VPLNIGGAHF…YAIGPLLEQL (89 aa)) enclose the BTB domain.

In terms of assembly, interacts with CUL3.

The protein resides in the cell membrane. It localises to the cytoplasm. It is found in the cytosol. Its function is as follows. May be involved in the control of excitability of cortical neurons. The protein is BTB/POZ domain-containing protein KCTD7 (Kctd7) of Rattus norvegicus (Rat).